The following is a 341-amino-acid chain: Thromboxane A2 receptor (341 aa).

Topologically, residues 1–29 (MWLNSTSLGACFRPVNITLQERRAIASPW) are extracellular. 2 N-linked (GlcNAc...) asparagine glycosylation sites follow: asparagine 4 and asparagine 16. Residues 30-52 (FAASFCALGLGSNLLALSVLAGA) traverse the membrane as a helical segment. Topologically, residues 53 to 65 (RPGAGPRSSFLAL) are cytoplasmic. A helical transmembrane segment spans residues 66 to 86 (LCGLVLTDFLGLLVTGAVVAS). Residues 87–105 (QHAALLDWRATDPGCRLCH) are Extracellular-facing. The cysteines at positions 104 and 181 are disulfide-linked. A helical transmembrane segment spans residues 106 to 127 (FMGAAMVFFGLCPLLLGAAMAA). The Cytoplasmic segment spans residues 128–147 (ERFVGITRPFSRPAATSRRA). Residues 148-170 (WATVGLVWVGAGTLGLLPLLGLG) form a helical membrane-spanning segment. Topologically, residues 171–191 (RYSVQYPGSWCFLTLGAERGD) are extracellular. A helical membrane pass occupies residues 192–217 (VAFGLMFALLGSVSVGLSLLLNTVSV). Residues 218–244 (ATLCRVYHAREATQRPRDCEVEMMVQL) lie on the Cytoplasmic side of the membrane. The chain crosses the membrane as a helical span at residues 245–268 (VGIMVVATVCWMPLLVFILQTLLQ). The Extracellular portion of the chain corresponds to 269-287 (TLPVMSPSGQLLRTTERQL). Residues 288–309 (LIYLRVATWNQILDPWVYILFR) traverse the membrane as a helical segment. The Cytoplasmic portion of the chain corresponds to 310 to 341 (RSVLRRLHPRFTSQLQAVSLHSPPTQAMLSGP). A Phosphoserine modification is found at serine 328.

This sequence belongs to the G-protein coupled receptor 1 family. Interacts with RPGRIP1L. Interacts with RACK1; the interaction regulates TBXA2R cell surface expression. As to expression, in the brain, expressed in all types of glial cells. In the kidney, expressed in the mesangial cells of the glomerulus, smooth muscle cells of the renal arterioles, and in transitional cell epithelium of renal pelvis.

It is found in the cell membrane. Receptor for thromboxane A2 (TXA2), a potent stimulator of platelet aggregation. The activity of this receptor is mediated by a G-protein that activates a phosphatidylinositol-calcium second messenger system. In the kidney, the binding of TXA2 to glomerular TP receptors causes intense vasoconstriction. Activates phospholipase C and adenylyl cyclase. This is Thromboxane A2 receptor (Tbxa2r) from Rattus norvegicus (Rat).